Here is a 341-residue protein sequence, read N- to C-terminus: ATP-dependent 6-phosphofructokinase 2 (341 aa).

ATP is bound by residues Gly10, 72–73 (RL), and 102–105 (GEGT). Residue Glu103 participates in Mg(2+) binding. Substrate contacts are provided by residues 125-127 (TID), Arg162, 169-171 (MGR), Glu222, Lys266, and 272-275 (HVQR). The active-site Proton acceptor is the Asp127.

Belongs to the phosphofructokinase type A (PFKA) family. Mixed-substrate PFK group III subfamily. Homodimer or homotetramer. The cofactor is Mg(2+).

Its subcellular location is the cytoplasm. The catalysed reaction is beta-D-fructose 6-phosphate + ATP = beta-D-fructose 1,6-bisphosphate + ADP + H(+). The protein operates within carbohydrate degradation; glycolysis; D-glyceraldehyde 3-phosphate and glycerone phosphate from D-glucose: step 3/4. Allosterically inhibited by phosphoenolpyruvate. Functionally, catalyzes the phosphorylation of D-fructose 6-phosphate to fructose 1,6-bisphosphate by ATP, the first committing step of glycolysis. The polypeptide is ATP-dependent 6-phosphofructokinase 2 (Streptomyces coelicolor (strain ATCC BAA-471 / A3(2) / M145)).